The following is a 665-amino-acid chain: Glycine--tRNA ligase beta subunit (665 aa).

Belongs to the class-II aminoacyl-tRNA synthetase family. In terms of assembly, tetramer of two alpha and two beta subunits.

It is found in the cytoplasm. The enzyme catalyses tRNA(Gly) + glycine + ATP = glycyl-tRNA(Gly) + AMP + diphosphate. The polypeptide is Glycine--tRNA ligase beta subunit (glyS) (Rickettsia prowazekii (strain Madrid E)).